The primary structure comprises 372 residues: L-lysine 4-hydroxylase (372 aa).

The Fe cation site is built by His176, Glu178, and His312.

It belongs to the clavaminate synthase family. Fe(2+) is required as a cofactor.

The catalysed reaction is L-lysine + 2-oxoglutarate + O2 = (4R)-4-hydroxy-L-lysine + succinate + CO2. Its function is as follows. Alpha-ketoglutarate-dependent dioxygenase that in vitro catalyzes the regio- and stereoselective hydroxylation of L-lysine, leading to (4R)-4-hydroxy-L-lysine. The protein is L-lysine 4-hydroxylase of Flavobacterium sp. (strain CF136).